The primary structure comprises 226 residues: ATP synthase F(0) complex subunit a (226 aa).

6 helical membrane passes run 12 to 32 (PTMM…ILFP), 68 to 88 (WALM…LGLL), 97 to 117 (QLSM…ITGF), 138 to 158 (IPML…ALAV), 164 to 184 (ITAG…LMNI), and 200 to 222 (TILE…SLYL).

The protein belongs to the ATPase A chain family. Component of the ATP synthase complex composed at least of ATP5F1A/subunit alpha, ATP5F1B/subunit beta, ATP5MC1/subunit c (homooctomer), MT-ATP6/subunit a, MT-ATP8/subunit 8, ATP5ME/subunit e, ATP5MF/subunit f, ATP5MG/subunit g, ATP5MK/subunit k, ATP5MJ/subunit j, ATP5F1C/subunit gamma, ATP5F1D/subunit delta, ATP5F1E/subunit epsilon, ATP5PF/subunit F6, ATP5PB/subunit b, ATP5PD/subunit d, ATP5PO/subunit OSCP. ATP synthase complex consists of a soluble F(1) head domain (subunits alpha(3) and beta(3)) - the catalytic core - and a membrane F(0) domain - the membrane proton channel (subunits c, a, 8, e, f, g, k and j). These two domains are linked by a central stalk (subunits gamma, delta, and epsilon) rotating inside the F1 region and a stationary peripheral stalk (subunits F6, b, d, and OSCP). Interacts with DNAJC30; interaction is direct.

It localises to the mitochondrion inner membrane. The enzyme catalyses H(+)(in) = H(+)(out). In terms of biological role, subunit a, of the mitochondrial membrane ATP synthase complex (F(1)F(0) ATP synthase or Complex V) that produces ATP from ADP in the presence of a proton gradient across the membrane which is generated by electron transport complexes of the respiratory chain. ATP synthase complex consist of a soluble F(1) head domain - the catalytic core - and a membrane F(1) domain - the membrane proton channel. These two domains are linked by a central stalk rotating inside the F(1) region and a stationary peripheral stalk. During catalysis, ATP synthesis in the catalytic domain of F(1) is coupled via a rotary mechanism of the central stalk subunits to proton translocation. With the subunit c (ATP5MC1), forms the proton-conducting channel in the F(0) domain, that contains two crucial half-channels (inlet and outlet) that facilitate proton movement from the mitochondrial intermembrane space (IMS) into the matrix. Protons are taken up via the inlet half-channel and released through the outlet half-channel, following a Grotthuss mechanism. The polypeptide is ATP synthase F(0) complex subunit a (Felis catus (Cat)).